A 686-amino-acid chain; its full sequence is Antigen peptide transporter 2 (686 aa).

The Lumenal portion of the chain corresponds to 1–6 (MRLPDL). Residues 7-27 (RPWTSLLLVDAALLWLLQGPL) traverse the membrane as a helical segment. The Cytoplasmic segment spans residues 28-56 (GTLLPQGLPGLWLEGTLRLGGLWGLLKLR). Residues 57-77 (GLLGFVGTLLLPLCLATPLTV) traverse the membrane as a helical segment. The Lumenal segment spans residues 78 to 98 (SLRALVAGASRAPPARVASAP). A helical transmembrane segment spans residues 99-119 (WSWLLVGYGAAGLSWSLWAVL). Residues 120–148 (SPPGAQEKEQDQVNNKVLMWRLLKLSRPD) are Cytoplasmic-facing. Residues 149–169 (LPLLVAAFFFLVLAVLGETLI) form a helical membrane-spanning segment. Residues 152–435 (LVAAFFFLVL…LVYIYGDMLS (284 aa)) enclose the ABC transmembrane type-1 domain. At 170–187 (PHYSGRVIDILGGDFDPH) the chain is on the lumenal side. A helical transmembrane segment spans residues 188-208 (AFASAIFFMCLFSFGSSLSAG). Over 209-266 (CRGGCFTYTMSRINLRIREQLFSSLLRQDLGFFQETKTGELNSRLSSDTTLMSNWLPL) the chain is Cytoplasmic. A helical membrane pass occupies residues 267-287 (NANVLLRSLVKVVGLYGFMLS). Residues 288-293 (ISPRLT) are Lumenal-facing. The chain crosses the membrane as a helical span at residues 294–314 (LLSLLHMPFTIAAEKVYNTRH). Positions 301–389 (PFTIAAEKVY…RRVLHLGVQM (89 aa)) are part of the peptide-binding site. The Cytoplasmic segment spans residues 315-374 (QEVLREIQDAVARAGQVVREAVGGLQTVRSFGAEEHEVCRYKEALEQCRQLYWRRDLERA). The helical transmembrane segment at 375–395 (LYLLVRRVLHLGVQMLMLSCG) threads the bilayer. At 396-408 (LQQMQDGELTQGS) the chain is on the lumenal side. Residues 409–429 (LLSFMIYQESVGSYVQTLVYI) traverse the membrane as a helical segment. The segment at 414 to 433 (IYQESVGSYVQTLVYIYGDM) is part of the peptide-binding site. Residues 430-686 (YGDMLSNVGA…EGKLQKLAQL (257 aa)) lie on the Cytoplasmic side of the membrane. The ABC transporter domain occupies 468 to 686 (VKFQDVSFAY…EGKLQKLAQL (219 aa)). 503–510 (GPNGSGKS) lines the ATP pocket.

Belongs to the ABC transporter superfamily. ABCB family. MHC peptide exporter (TC 3.A.1.209) subfamily. In terms of assembly, heterodimer of TAP1 and TAP2 (TAP1-TAP2). A component of the peptide loading complex (PLC), interacts via TAPBP with MHCI heterodimer; this interaction mediates peptide-MHCI assembly. Recruits TAPBP in a 1:1 stoichiometry. Interacts with classical MHCI such as HLA-A*02-B2M; this interaction is obligatory for the loading of peptide epitopes. Interacts with non-classical MHCI molecules including HLA-E-B2M and HLA-F-B2M as well as PLC component CALR before the peptide loading. As to quaternary structure, (Microbial infection) Interacts with Epstein-Barr virus BLNF2a. (Microbial infection) Interacts with herpes simplex virus US12/ICP47. In terms of assembly, (Microbial infection) Interacts with adenovirus E3-19K glycoprotein, which binds TAP1-TAP2 and acts as a TAPBP inhibitor, preventing TAP1-TAP2 association with MHCI. Mg(2+) serves as cofactor.

It localises to the endoplasmic reticulum membrane. The catalysed reaction is a peptide antigen(in) + ATP + H2O = a peptide antigen(out) + ADP + phosphate + H(+). Its activity is regulated as follows. Inhibited at high ER lumenal peptide concentrations. (Microbial infection) Inhibited by herpes simplex virus US12/ICP47 protein, which blocks the peptide-binding site of TAP1-TAP2. With respect to regulation, (Microbial infection) Inhibited by human cytomegalovirus US6 glycoprotein, which binds to the lumenal side of TAP1-TAP2 complex and inhibits peptide translocation by specifically blocking ATP-binding and preventing TAP1-TAP2 conformational rearrangement induced by peptide binding. In terms of biological role, ABC transporter associated with antigen processing. In complex with TAP1 mediates unidirectional translocation of peptide antigens from cytosol to endoplasmic reticulum (ER) for loading onto MHC class I (MHCI) molecules. Uses the chemical energy of ATP to export peptides against the concentration gradient. During the transport cycle alternates between 'inward-facing' state with peptide binding site facing the cytosol to 'outward-facing' state with peptide binding site facing the ER lumen. Peptide antigen binding to ATP-loaded TAP1-TAP2 induces a switch to hydrolysis-competent 'outward-facing' conformation ready for peptide loading onto nascent MHCI molecules. Subsequently ATP hydrolysis resets the transporter to the 'inward facing' state for a new cycle. Typically transports intracellular peptide antigens of 8 to 13 amino acids that arise from cytosolic proteolysis via IFNG-induced immunoproteasome. Binds peptides with free N- and C-termini, the first three and the C-terminal residues being critical. Preferentially selects peptides having a highly hydrophobic residue at position 3 and hydrophobic or charged residues at the C-terminal anchor. Proline at position 2 has the most destabilizing effect. As a component of the peptide loading complex (PLC), acts as a molecular scaffold essential for peptide-MHCI assembly and antigen presentation. The polypeptide is Antigen peptide transporter 2 (Homo sapiens (Human)).